A 1131-amino-acid polypeptide reads, in one-letter code: Inositol hexakisphosphate and diphosphoinositol-pentakisphosphate kinase 2 (1131 aa).

The disordered stretch occupies residues 21-53 (DELLDQSKPENLDNLYEHTEDEEDEEDDEYDSP). The segment covering 25-38 (DQSKPENLDNLYEH) has biased composition (basic and acidic residues). The segment covering 39-52 (TEDEEDEEDDEYDS) has biased composition (acidic residues). 67–68 (KK) is a substrate binding site. ATP contacts are provided by residues arginine 148, lysine 201, histidine 208, arginine 227, 251-254 (EEFM), and 260-262 (DVK). Residue 227–228 (RK) participates in substrate binding. Substrate is bound by residues lysine 262 and arginine 276. ATP is bound by residues serine 278, aspartate 323, and 335–337 (DVN). 340-343 (SFVK) is a substrate binding site. A polyphosphoinositide-binding domain region spans residues 385-456 (PTTSGTKMEL…VLDIARQLLV (72 aa)). Residues 912–951 (KGCEEDKNLPSGFGYRPASQENESSKKHTHANDSDEDLGV) form a disordered region. A compositionally biased stretch (basic and acidic residues) spans 934-951 (ESSKKHTHANDSDEDLGV).

It belongs to the histidine acid phosphatase family. VIP1 subfamily.

The protein resides in the cytoplasm. It localises to the cytosol. The enzyme catalyses 1D-myo-inositol hexakisphosphate + ATP = 1-diphospho-1D-myo-inositol 2,3,4,5,6-pentakisphosphate + ADP. It carries out the reaction 5-diphospho-1D-myo-inositol 1,2,3,4,6-pentakisphosphate + ATP + H(+) = 1,5-bis(diphospho)-1D-myo-inositol 2,3,4,6-tetrakisphosphate + ADP. Bifunctional inositol kinase that acts in concert with the IP6K kinases IP6K1, IP6K2 and IP6K3 to synthesize the diphosphate group-containing inositol pyrophosphates diphosphoinositol pentakisphosphate, PP-InsP5, and bis-diphosphoinositol tetrakisphosphate, (PP)2-InsP4. PP-InsP5 and (PP)2-InsP4, also respectively called InsP7 and InsP8, regulate a variety of cellular processes, including apoptosis, vesicle trafficking, cytoskeletal dynamics, exocytosis, insulin signaling and neutrophil activation. Phosphorylates inositol hexakisphosphate (InsP6) at position 1 to produce PP-InsP5 which is in turn phosphorylated by IP6Ks to produce (PP)2-InsP4. Alternatively, phosphorylates PP-InsP5 at position 1, produced by IP6Ks from InsP6, to produce (PP)2-InsP4. This chain is Inositol hexakisphosphate and diphosphoinositol-pentakisphosphate kinase 2, found in Xenopus laevis (African clawed frog).